The chain runs to 268 residues: ClpXP adapter protein SpxH (268 aa).

The protein belongs to the SpxH family. In terms of assembly, interacts with Spx.

The protein resides in the cytoplasm. In terms of biological role, adapter protein required for efficient degradation of Spx by ClpXP under non-stress conditions. Interaction with Spx stabilizes Spx and exposes the C-terminus of Spx for recognition and proteolysis by ClpXP. This chain is ClpXP adapter protein SpxH, found in Staphylococcus aureus (strain MRSA252).